The chain runs to 2227 residues: Genome polyprotein (2227 aa).

2 short sequence motifs ((L)YPX(n)L motif) span residues 167 to 171 and 200 to 205; these read YPHGL and YPVWEL. The interval 766–836 is involved in P1-2A pentamerization; sequence MMSRIAAGDL…PRKMKGLFSQ (71 aa). Residues 1011 to 1031 traverse the membrane as a helical segment; that stretch reads TVEIINTVLCFVKSGILLYVI. The segment at 1043 to 1070 is membrane-penetrating ability; sequence IGLLRVMNYADIGCSVISCGKVFSKMLE. Positions 1127 to 1152 form a coiled coil; sequence KKKDILNILKDNQQKIEKAIEEADNF. Residues 1204 to 1366 enclose the SF3 helicase domain; that stretch reads HQKLKNLGSI…SFFKNPHNDM (163 aa). 1230 to 1237 is a binding site for ATP; that stretch reads GKRGGGKS. A helical membrane pass occupies residues 1462-1482; the sequence is WVAVGAAVGILGVLVGGWFVY. Tyr-1499 bears the O-(5'-phospho-RNA)-tyrosine mark. The region spanning 1514–1728 is the Peptidase C3 domain; the sequence is DPVESQSTLE…VAKLVTQEMF (215 aa). Catalysis depends on for protease 3C activity residues His-1563, Asp-1603, and Cys-1691. In terms of domain architecture, RdRp catalytic spans 1976–2097; it reads DVGLDLDFSA…VFSRDVQIDN (122 aa).

Belongs to the picornaviridae polyprotein family. Homodimer. Homomultimer; probably interacts with membranes in a multimeric form. Seems to assemble into amyloid-like fibers. As to quaternary structure, homodimer. Monomer. Interacts with protein 3CD. In terms of assembly, interacts with host ACBD3. Interacts with protein 3AB. As to quaternary structure, interacts with human MAVS. In terms of assembly, homodimer; disulfide-linked. Homopentamer. Homooligomer. As to quaternary structure, interacts with capsid protein VP2. Interacts with capsid protein VP3. In terms of assembly, interacts with capsid protein VP1. Interacts with capsid protein VP3. Interacts with capsid protein VP1. Interacts with capsid protein VP2. Specific enzymatic cleavages by viral protease in vivo yield a variety of precursors and mature proteins. Polyprotein processing intermediates are produced, such as P1-2A which is a functional precursor of the structural proteins, VP0 which is a VP4-VP2 precursor, VP1-2A precursor, 3ABC precursor which is a stable and catalytically active precursor of 3A, 3B and 3C proteins, 3AB and 3CD precursors. The assembly signal 2A is removed from VP1-2A by a host protease, possibly host Cathepsin L. This cleavage occurs over a region of 3 amino-acids probably generating VP1 proteins with heterogeneous C-termini. In terms of processing, during virion maturation, immature virions are rendered infectious following cleavage of VP0 into VP4 and VP2. This maturation seems to be an autocatalytic event triggered by the presence of RNA in the capsid and is followed by a conformational change of the particle. Post-translationally, the assembly signal 2A is removed from VP1-2A by a host protease, possibly host Cathepsin L in naked virions. This cleavage does not occur in enveloped virions. This cleavage occurs over a region of 3 amino-acids probably generating VP1 proteins with heterogeneous C-termini. VPg is uridylylated prior to priming replication into VPg-pUpU. In terms of processing, unlike other picornaviruses, does not seem to be myristoylated.

It localises to the virion. The protein resides in the host endosome. Its subcellular location is the host multivesicular body. The protein localises to the host membrane. It is found in the host mitochondrion outer membrane. It localises to the host cytoplasm. The protein resides in the host cytoplasmic vesicle membrane. It carries out the reaction RNA(n) + a ribonucleoside 5'-triphosphate = RNA(n+1) + diphosphate. The catalysed reaction is a ribonucleoside 5'-triphosphate + H2O = a ribonucleoside 5'-diphosphate + phosphate + H(+). The enzyme catalyses Selective cleavage of Gln-|-Gly bond in the poliovirus polyprotein. In other picornavirus reactions Glu may be substituted for Gln, and Ser or Thr for Gly.. Capsid proteins VP1, VP2, and VP3 form a closed capsid enclosing the viral positive strand RNA genome. All these proteins contain a beta-sheet structure called beta-barrel jelly roll. Together they form an icosahedral capsid (T=3) composed of 60 copies of each VP1, VP2, and VP3, with a diameter of approximately 300 Angstroms. VP1 is situated at the 12 fivefold axes, whereas VP2 and VP3 are located at the quasi-sixfold axes. The naked capsid interacts with the host receptor HAVCR1 to provide virion attachment to and probably entry into the target cell. Functionally, VP0 precursor is a component of the immature procapsids. Its function is as follows. Plays a role in the assembly of the 12 pentamers into an icosahedral structure. Has not been detected in mature virions, supposedly owing to its small size. In terms of biological role, precursor component of immature procapsids that corresponds to an extended form of the structural protein VP1. After maturation, possibly by the host Cathepsin L, the assembly signal 2A is cleaved to give rise to the mature VP1 protein. Functions as a viroporin. Affects membrane integrity and causes an increase in membrane permeability. Involved in host intracellular membrane rearrangements probably to give rise to the viral factories. Does not disrupt calcium homeostasis or glycoprotein trafficking. Antagonizes the innate immune response of the host by suppressing IFN-beta synthesis, which it achieves by interfering with the RIG-I/IFIH1 pathway. Functionally, affects membrane integrity and causes an increase in membrane permeability. Its function is as follows. Associates with and induces structural rearrangements of intracellular membranes. Displays RNA-binding activity. In terms of biological role, the precursor 3ABC is targeted to the mitochondrial membrane where protease 3C activity cleaves and inhibits the host antiviral protein MAVS, thereby disrupting activation of IRF3 through the IFIH1/MDA5 pathway. In vivo, the protease activity of 3ABC precursor is more efficient in cleaving the 2BC precursor than that of protein 3C. The 3ABC precursor may therefore play a role in the proteolytic processing of the polyprotein. Possible viroporin. Interacts with the 3CD precursor and with RNA structures found at both the 5'- and 3'-termini of the viral genome. Since the 3AB precursor contains the hydrophobic domain 3A, it probably anchors the whole viral replicase complex to intracellular membranes on which viral RNA synthesis occurs. Functionally, may serve as membrane anchor to the 3AB and 3ABC precursors via its hydrophobic domain. May interact with RNA. Its function is as follows. Acts as a primer for viral RNA replication and remains covalently bound to viral genomic RNA. VPg is uridylylated prior to priming replication into VPg-pUpU. The VPg-pUpU is then used as primer on the genomic RNA poly(A) by the RNA-dependent RNA polymerase to replicate the viral genome. In terms of biological role, cysteine protease that generates mature viral proteins from the precursor polyprotein. In addition to its proteolytic activity, it binds to viral RNA, and thus influences viral genome replication. RNA and substrate bind cooperatively to the protease. Cleaves IKBKG/NEMO to impair innate immune signaling. Cleaves host PABPC1 which may participate in the switch of viral translation to RNA synthesis. Interacts with the 3AB precursor and with RNA structures found at both the 5'- and 3'-termini of the viral genome. Disrupts TLR3 signaling by degrading the host adapter protein TICAM1/TRIF. Functionally, RNA-directed RNA polymerase 3D-POL replicates genomic and antigenomic RNA by recognizing replications specific signals. The protein is Genome polyprotein of Human hepatitis A virus genotype IA (isolate H2) (HHAV).